A 206-amino-acid polypeptide reads, in one-letter code: Holliday junction branch migration complex subunit RuvA (206 aa).

Residues 1-63 (MIASLRGTVI…EDAMKLYGFI (63 aa)) form a domain I region. The segment at 64 to 142 (DNESREMFSV…AFAAGVVDEG (79 aa)) is domain II. The segment at 143–153 (GEQISLPNANI) is flexible linker. Residues 154–206 (ASEVVVEQVSQALVGLGFSEKQSDDAVSFVLAADPSLDTSGALRAALAKLSGK) form a domain III region.

Belongs to the RuvA family. Homotetramer. Forms an RuvA(8)-RuvB(12)-Holliday junction (HJ) complex. HJ DNA is sandwiched between 2 RuvA tetramers; dsDNA enters through RuvA and exits via RuvB. An RuvB hexamer assembles on each DNA strand where it exits the tetramer. Each RuvB hexamer is contacted by two RuvA subunits (via domain III) on 2 adjacent RuvB subunits; this complex drives branch migration. In the full resolvosome a probable DNA-RuvA(4)-RuvB(12)-RuvC(2) complex forms which resolves the HJ.

The protein resides in the cytoplasm. Its function is as follows. The RuvA-RuvB-RuvC complex processes Holliday junction (HJ) DNA during genetic recombination and DNA repair, while the RuvA-RuvB complex plays an important role in the rescue of blocked DNA replication forks via replication fork reversal (RFR). RuvA specifically binds to HJ cruciform DNA, conferring on it an open structure. The RuvB hexamer acts as an ATP-dependent pump, pulling dsDNA into and through the RuvAB complex. HJ branch migration allows RuvC to scan DNA until it finds its consensus sequence, where it cleaves and resolves the cruciform DNA. The chain is Holliday junction branch migration complex subunit RuvA from Corynebacterium glutamicum (strain ATCC 13032 / DSM 20300 / JCM 1318 / BCRC 11384 / CCUG 27702 / LMG 3730 / NBRC 12168 / NCIMB 10025 / NRRL B-2784 / 534).